A 277-amino-acid polypeptide reads, in one-letter code: GPALPP motifs-containing protein 1 (277 aa).

A disordered region spans residues 1-240; the sequence is MARDLIGPAL…VWTDTPADRE (240 aa). Ala-2 bears the N-acetylalanine mark. The short motif at 7 to 12 is the GPALPP motif 1 element; the sequence is GPALPP. Ser-28 carries the post-translational modification Phosphoserine. The GPALPP motif 2 motif lies at 32–37; it reads GPALPP. 2 stretches are compositionally biased toward acidic residues: residues 60-69 and 81-90; these read GNQESEEDDT and DDDDDDDDEG. A GPALPP motif 3 motif is present at residues 93-98; the sequence is GPALPP. The residue at position 106 (Ser-106) is a Phosphoserine. Residues 108–117 show a composition bias toward pro residues; the sequence is PRPMIGPALP. The GPALPP motif 4 signature appears at 113-118; it reads GPALPP. 2 positions are modified to phosphoserine: Ser-138 and Ser-143. Thr-147 carries the phosphothreonine modification. Phosphoserine occurs at positions 149 and 150. The segment covering 172 to 196 has biased composition (basic and acidic residues); it reads EFEKRAQRMKEKLTKGDDDSSKPIT.

The sequence is that of GPALPP motifs-containing protein 1 (GPALPP1) from Bos taurus (Bovine).